The following is a 388-amino-acid chain: Paired box protein Pax-5 (388 aa).

The segment at residues 15 to 141 is a DNA-binding region (paired); that stretch reads RHGGVNQLGG…SSINRIIRTK (127 aa). A PAI subdomain region spans residues 18-74; sequence GVNQLGGVFVNGRPLPDVVRQRIVELAHQGVRPCDISRQLRVSHGCVSKILGRYYET. Positions 93–141 are RED subdomain; the sequence is KVVDKIADYKRQNPTMFAWEIRDRLLAERVCDNDTVPSVSSINRIIRTK. Positions 143–158 are enriched in polar residues; that stretch reads QQPTNQQIPPSNHSIA. Disordered stretches follow at residues 143–162 and 191–217; these read QQPTNQQIPPSNHSIASTGS and AETNKRKRDEGIQESPIPNGHSLPGRD.

In terms of tissue distribution, first detected in mid-neurula embryos in the folding neural tube. With the completion of neurulation, expression becomes localized to the midbrain/hindbrain boundary (MHB) till at least stage 40. Expression is absent from regions adjacent to the MHB. In tailbuds, weakly and transiently expressed in the developing otic vesicle from stage 21 to stage 27.

The protein localises to the nucleus. Its function is as follows. Probable transcription factor. This chain is Paired box protein Pax-5, found in Xenopus laevis (African clawed frog).